The primary structure comprises 378 residues: Acid phosphatase-like protein XcAP-2 (378 aa).

The signal sequence occupies residues 1–19; the sequence is MKTTILLLVVLTIVQLSKA. 3 disulfides stabilise this stretch: cysteine 147–cysteine 374, cysteine 168–cysteine 220, and cysteine 347–cysteine 351.

It belongs to the histidine acid phosphatase family.

The protein resides in the secreted. In terms of biological role, probably modulates blood feeding of fleas on vertebrate species by binding and sequestering different mediators involved in the host response. Binds histamine. Binds leukotriene B4, leukotriene C4, leukotriene D4 and leukotriene E4. Does not bind serotonin, adrenaline, noradrenaline, ADP, and stable analogs of thromboxane A2: U-46619 and cTXA2. The polypeptide is Acid phosphatase-like protein XcAP-2 (Xenopsylla cheopis (Oriental rat flea)).